A 228-amino-acid polypeptide reads, in one-letter code: Putative elongation factor Tu-like protein (228 aa).

Residues 6 to 212 (KPHINVGTIG…LPIREKDNPF (207 aa)) enclose the tr-type G domain. The G1 stretch occupies residues 15 to 22 (GHVDHGKT). Residues 59 to 63 (GITIS) are G2. The tract at residues 80 to 83 (DCPG) is G3. Positions 135–138 (NKCD) are G4. The interval 173 to 175 (SAV) is G5.

This sequence belongs to the TRAFAC class translation factor GTPase superfamily. Classic translation factor GTPase family. EF-Tu/EF-1A subfamily.

The sequence is that of Putative elongation factor Tu-like protein from Ehrlichia ruminantium (strain Welgevonden).